The chain runs to 247 residues: 1-(5-phosphoribosyl)-5-[(5-phosphoribosylamino)methylideneamino] imidazole-4-carboxamide isomerase (247 aa).

D8 serves as the catalytic Proton acceptor. The Proton donor role is filled by D131.

It belongs to the HisA/HisF family.

It is found in the cytoplasm. The catalysed reaction is 1-(5-phospho-beta-D-ribosyl)-5-[(5-phospho-beta-D-ribosylamino)methylideneamino]imidazole-4-carboxamide = 5-[(5-phospho-1-deoxy-D-ribulos-1-ylimino)methylamino]-1-(5-phospho-beta-D-ribosyl)imidazole-4-carboxamide. The protein operates within amino-acid biosynthesis; L-histidine biosynthesis; L-histidine from 5-phospho-alpha-D-ribose 1-diphosphate: step 4/9. The chain is 1-(5-phosphoribosyl)-5-[(5-phosphoribosylamino)methylideneamino] imidazole-4-carboxamide isomerase from Acidovorax sp. (strain JS42).